Reading from the N-terminus, the 188-residue chain is UPF0301 protein XC_1365 (188 aa).

The protein belongs to the UPF0301 (AlgH) family.

The polypeptide is UPF0301 protein XC_1365 (Xanthomonas campestris pv. campestris (strain 8004)).